A 149-amino-acid polypeptide reads, in one-letter code: Ribonuclease-like 3 (149 aa).

Positions 1–22 are cleaved as a signal peptide; sequence MGIHQCTAVVLLLLCASLSTYG. Gln-23 bears the Pyrrolidone carboxylic acid mark. His-38 acts as the Proton acceptor in catalysis. Intrachain disulfides connect Cys-48/Cys-109, Cys-66/Cys-120, and Cys-84/Cys-135. 67–71 contributes to the substrate binding site; that stretch reads KEVNT. Catalysis depends on His-142, which acts as the Proton donor.

This sequence belongs to the pancreatic ribonuclease family. In terms of processing, cleavage between Arg-55 and Arg-56 is catalyzed by a membrane-localized Gram-negative bacterium protease (OmpT in E.coli). The excised fragment is then transported to the bacterium cytosol for cleavage of the disulfide bridge linking Cys-48 and Cys-109, thus separating the N-terminal and LF-ZF3. LF-ZF3 but not the N-terminal peptide possesses bactericidal activity. In terms of tissue distribution, strongly expressed in the adult liver and gut, and weakly in the heart and testis.

Its subcellular location is the secreted. Functionally, ribonuclease. Angiogenic. Plays a role in host defense. Exhibits strong antibacterial activity against Gram-negative bacteria but mild antibacterial activity against Gram-positive bacteria. The RNase activity is not required for the bactericidal activity. The protein is Ribonuclease-like 3 of Danio rerio (Zebrafish).